The primary structure comprises 141 residues: Lutropin subunit beta (141 aa).

An N-terminal signal peptide occupies residues 1 to 21; the sequence is MERYQELTVLLLLLLLEGGSG. Cystine bridges form between cysteine 30/cysteine 78, cysteine 44/cysteine 93, cysteine 47/cysteine 131, cysteine 55/cysteine 109, cysteine 59/cysteine 111, and cysteine 114/cysteine 121. Asparagine 34 carries an N-linked (GlcNAc...) asparagine glycan.

This sequence belongs to the glycoprotein hormones subunit beta family. In terms of assembly, heterodimer of a common alpha chain and a unique beta chain which confers biological specificity to thyrotropin, lutropin, follitropin and gonadotropin.

It localises to the secreted. Functionally, promotes spermatogenesis and ovulation by stimulating the testes and ovaries to synthesize steroids. This Monodelphis domestica (Gray short-tailed opossum) protein is Lutropin subunit beta (LHB).